The primary structure comprises 39 residues: Large ribosomal subunit protein bL36 (39 aa).

This sequence belongs to the bacterial ribosomal protein bL36 family.

This Limosilactobacillus reuteri (strain DSM 20016) (Lactobacillus reuteri) protein is Large ribosomal subunit protein bL36.